A 482-amino-acid polypeptide reads, in one-letter code: UDP-glycosyltransferase 86A2 (482 aa).

Residues Ser-297, Cys-355–Gln-357, His-372–Glu-380, and Leu-394–Gln-397 contribute to the UDP-alpha-D-glucose site.

This sequence belongs to the UDP-glycosyltransferase family.

The protein is UDP-glycosyltransferase 86A2 (UGT86A2) of Arabidopsis thaliana (Mouse-ear cress).